Reading from the N-terminus, the 509-residue chain is uncharacterized protein (509 aa).

The protein localises to the virion. This is an uncharacterized protein from Acanthamoeba polyphaga mimivirus (APMV).